Consider the following 362-residue polypeptide: Serine/threonine-protein kinase SRK2E (362 aa).

Phosphoserine; by autocatalysis occurs at positions 7, 18, 29, and 43. The Protein kinase domain occupies 21–277 (YELVKDIGSG…IPEIRNHEWF (257 aa)). Residue 27-35 (IGSGNFGVA) coordinates ATP. Lys50 is a binding site for ATP. Asp140 (proton acceptor) is an active-site residue. Residues 160 to 186 (DFGYSKSSVLHSQPKSTVGTPAYIAPE) are activation loop. Ser175 is modified (phosphoserine). A domain I; osmotic stress response, required for the kinase activity region spans residues 283–318 (ADLMNDNTMTTQFDESDQPGQSIEEIMQIIAEATVP). A domain II; ABA response and ABI1 binding region spans residues 319-362 (PAGTQNLNHYLTGSLDIDDDMEEDLESDLDDLDIDSSGEIVYAM).

The protein belongs to the protein kinase superfamily. Ser/Thr protein kinase family. As to quaternary structure, interacts with ABI1, PP2CA and SLAC1. Interacts with B'ALPHA, B'BETA, B'DELTA, PP2AA2, PP2AA3, PP2A1 and PP2A2. Associates with MAPKKK18 within the nucleus. Interacts with I-2, TOPP1 and TOPP2. Interacts with ABI2. Post-translationally, autophosphorylation on residues Ser-7, Ser-18, Ser-29, Ser-43, Ser-175 and/or Thr-176. Only the phosphorylation of Ser-175 is crucial for the kinase activity. The phosphorylation of Ser-43 may repress the ABA signaling pathway in absence of ABA. As to expression, expressed in seedlings, leaves, flowers, stems, and roots, but restricted to guard cells and vascular tissue.

The protein localises to the nucleus. It catalyses the reaction L-seryl-[protein] + ATP = O-phospho-L-seryl-[protein] + ADP + H(+). The catalysed reaction is L-threonyl-[protein] + ATP = O-phospho-L-threonyl-[protein] + ADP + H(+). With respect to regulation, kinase activity enhanced by ABA and low humidity. Repressed by PP2CA independently of its phosphatase activity. Probably inactivated by ABI1. Repressed by TOPP1. Negatively regulated by ABI2. Functionally, activator of the abscisic acid (ABA) signaling pathway that regulates numerous ABA responses, such as stomata closure in response to drought, darkness, high CO(2), plant pathogens, or decreases in atmospheric relative humidity (RH). Involved in the resistance to drought by avoiding water loss. Required for the stomata closure mediated by pathogen-associated molecular pattern (PAMPs) (e.g. flg22 and LPS) of pathogenic bacteria such as P.syringae pv. tomato (Pst) and E.coli O157:H7. As a plant defense process, stomata are closed transiently in order to limit invaders, but actively reopened by bacteria after a few hours; virulent strains (e.g. Pst DC3000) are more efficient than avirulent strains (e.g. Pst DC3000 AvrRpt2) in reopening stomata. Mediates the phosphorylation and activation of the S-type anion efflux channel SLAC1, and thus promotes stomata closure. Essential for stomatal closure in response to reactive oxygen species (ROS). Promotes MAPKKK18 activity upon abscisic acid (ABA) treatment. In Arabidopsis thaliana (Mouse-ear cress), this protein is Serine/threonine-protein kinase SRK2E.